The chain runs to 456 residues: Anthranilate synthase component 1 (456 aa).

L-tryptophan is bound by residues Ser31 and Ser244 to Met246. Residue Gly279–Thr280 coordinates chorismate. Position 306 (Glu306) interacts with Mg(2+). Residues Tyr394, Arg414, Gly428–Gly430, and Gly430 contribute to the chorismate site. Glu443 is a binding site for Mg(2+).

Belongs to the anthranilate synthase component I family. In terms of assembly, heterotetramer consisting of two non-identical subunits: a beta subunit (TrpG) and a large alpha subunit (TrpE). It depends on Mg(2+) as a cofactor.

The catalysed reaction is chorismate + L-glutamine = anthranilate + pyruvate + L-glutamate + H(+). Its pathway is amino-acid biosynthesis; L-tryptophan biosynthesis; L-tryptophan from chorismate: step 1/5. With respect to regulation, feedback inhibited by tryptophan. Its function is as follows. Part of a heterotetrameric complex that catalyzes the two-step biosynthesis of anthranilate, an intermediate in the biosynthesis of L-tryptophan. In the first step, the glutamine-binding beta subunit (TrpG) of anthranilate synthase (AS) provides the glutamine amidotransferase activity which generates ammonia as a substrate that, along with chorismate, is used in the second step, catalyzed by the large alpha subunit of AS (TrpE) to produce anthranilate. In the absence of TrpG, TrpE can synthesize anthranilate directly from chorismate and high concentrations of ammonia. The sequence is that of Anthranilate synthase component 1 (trpE) from Lactococcus lactis subsp. lactis (strain IL1403) (Streptococcus lactis).